A 206-amino-acid chain; its full sequence is MKHNNVIPNGHFKKHWQNYVKTWFNQPARKTRRRVARQKKAVKIFPRPTAGPLRPVVHGQTLKYNMKVRTGKGFTLEELKAAGIPKKLAPTIGISLDHRRKNRSLEGLQSNVQRLKTYKAKLVIFPRRARKVKAGDSTAEELANATQVQGDYMPIVREKQAMELVKLTSEMKSVNAYDKIRLERTNKRHAGARAKRAADAEKEEKK.

Residues 182-206 (LERTNKRHAGARAKRAADAEKEEKK) form a disordered region. The span at 186–195 (NKRHAGARAK) shows a compositional bias: basic residues. A compositionally biased stretch (basic and acidic residues) spans 196–206 (RAADAEKEEKK).

Belongs to the eukaryotic ribosomal protein eL13 family.

In Brassica napus (Rape), this protein is Large ribosomal subunit protein eL13y.